A 900-amino-acid polypeptide reads, in one-letter code: MSENIKQGGAGTFMQAPQDSVPLPPKDAEVMTTACDYCTVACGYKVYRWPVGKEGGMKAKDNAFNADFPHQQIFGAWASPAQHNIVNHNGRSHHVLVLPDRDTTVVNPGGNHSIRGGTLAQKCYNPSNRTSERLLYPMIRVRGTLMPVSWDLATEVMADISQYILAKYGEHAWAMKTYSYQYFENTYAITKLGMTSIGTPAFAWHDKASATNDATGLDDAGVNSFASSDQDWADCEVAFLSGVDPYETKTTLFTQWMMPGDKKFIFVTPHRTMGVAWAESTGRGMWLPIIPGTDTVLHLALARIIVENGWQDQAFIDKWVANKWEVDSGYGRGTRNTGWQWRTTWGKWQSDWKDYSAWILKQKEGELETAAKITGLRAEDIRKAAEWIAKPKADGTRVKASFMLEKGNYWTNNYMNSASLASLGLICGSGNRPGQMISRGGGHQRGGMSAGGGSGWLSPEKYPGRRKKSFNLDRWMMNGNVRFAWVIGTTWTAAMMASQALQDKMFSLTRGNPHQISSLDRKAIFETLKQRVDSGGTVIANSDIYPCVPVGTEYADIVLPAATWGEDNFTRCNSERRLRLYSKFYDAPGEAKPDWWIIAKFAQKMGYDKDGSYQWKNSNDVFEEAARFGRNGVLNYHPLVVKAKEKGVKGHELLRTYGTDGIQTPIRMKDGELVGTQRLHDPANDWDEVEGQEVKRKWLYAFGTHSGKAILLKTPWDYPGWSQFYKAALPRKEKGEVWVTNGRVNETWQSGFDDLRKPYLSQRWPYPMLIMHPDEAKPRGIESGDFVQVYNDTVYIQMGEPQGVKEDDLYFDTLMKNGHIKTTDGQFVAVAIVSEEMRPGVVMANFNYPQAPANSVVHAVPDPMTNNYRYKLGRGVLTKVGESPYKHSFTSMTLKPRDIV.

The disordered stretch occupies residues 1–21 (MSENIKQGGAGTFMQAPQDSV). Positions 35, 38, and 42 each coordinate [3Fe-4S] cluster.

Belongs to the prokaryotic molybdopterin-containing oxidoreductase family. As to quaternary structure, the iodate reductase (Idr) complex is composed of a molybdopterin-dependent iodate reductase (IdrA and IdrB subunits) and two associated peroxidases (IdrP1 and IdrP2). [3Fe-4S] cluster serves as cofactor. The cofactor is Mo-bis(molybdopterin guanine dinucleotide).

The protein localises to the periplasm. In terms of biological role, involved in iodate respiration. May accept electrons from cytochrome c551, and catalyze the reduction of iodate (IO(3)(-)) to produce the chemically unstable intermediate hypoiodous acid (HIO). This intermediate then undergoes abiotic disproportionation to yield two molecules of iodide (I(-)) and one molecule of iodate. The resultant iodate subsequently cycles back into the reductive pathway. The initial reduction of iodate may inadvertently produce low levels of incidental toxic H(2)O(2), which is detoxified by IdrP1 and IdrP2. The protein is Iodate reductase subunit IdrA of Denitromonas iodatirespirans.